The sequence spans 524 residues: Ribonuclease Y (524 aa).

The helical transmembrane segment at 7–27 threads the bilayer; that stretch reads LGGLLTGIVIAIIASIIASVI. Residues 214 to 299 form the KH domain; sequence TVSVVPLPND…EMVEKARKEV (86 aa). The HD domain maps to 340-433; it reads VLSHSIEVAR…VQAADSISAA (94 aa).

It belongs to the RNase Y family.

It is found in the cell membrane. Its function is as follows. Endoribonuclease that initiates mRNA decay. This chain is Ribonuclease Y, found in Acetivibrio thermocellus (strain ATCC 27405 / DSM 1237 / JCM 9322 / NBRC 103400 / NCIMB 10682 / NRRL B-4536 / VPI 7372) (Clostridium thermocellum).